A 411-amino-acid polypeptide reads, in one-letter code: E3 ubiquitin-protein ligase PUB23 (411 aa).

The region spanning 11–86 (EIPPFFLCPI…QSWCTLNASY (76 aa)) is the U-box domain. 4 ARM repeats span residues 132–173 (ATNK…HLET), 175–203 (ETVL…RGMY), 221–261 (DPMQ…NICP), and 263–306 (GRNR…LLCQ).

In terms of assembly, interacts with RPN12A. In terms of processing, auto-ubiquitinated.

It is found in the cytoplasm. It catalyses the reaction S-ubiquitinyl-[E2 ubiquitin-conjugating enzyme]-L-cysteine + [acceptor protein]-L-lysine = [E2 ubiquitin-conjugating enzyme]-L-cysteine + N(6)-ubiquitinyl-[acceptor protein]-L-lysine.. It participates in protein modification; protein ubiquitination. E3 ubiquitin-protein ligase that negatively regulates water stress response. May control in coordination with PUB23 a drought signaling pathway by ubiquitinating cytosolic RPN12a. Acts as a negative regulator of the immunity triggered by the pathogen-associated molecular patterns (PAMPs), in association with PUB22 and PUB24. This Arabidopsis thaliana (Mouse-ear cress) protein is E3 ubiquitin-protein ligase PUB23 (PUB23).